The chain runs to 307 residues: Thioredoxin reductase (307 aa).

36 to 43 lines the FAD pocket; it reads DNAAPGGK. Residues Cys138 and Cys141 are joined by a disulfide bond. 278–287 contacts FAD; it reads DIRIKDIRQI.

It belongs to the class-II pyridine nucleotide-disulfide oxidoreductase family. As to quaternary structure, homodimer. FAD is required as a cofactor.

It is found in the cytoplasm. The enzyme catalyses [thioredoxin]-dithiol + NADP(+) = [thioredoxin]-disulfide + NADPH + H(+). This Mycoplasmopsis pulmonis (strain UAB CTIP) (Mycoplasma pulmonis) protein is Thioredoxin reductase (trxB).